The primary structure comprises 355 residues: Protein RecA (355 aa).

ATP is bound at residue glycine 67–threonine 74.

Belongs to the RecA family.

Its subcellular location is the cytoplasm. In terms of biological role, can catalyze the hydrolysis of ATP in the presence of single-stranded DNA, the ATP-dependent uptake of single-stranded DNA by duplex DNA, and the ATP-dependent hybridization of homologous single-stranded DNAs. It interacts with LexA causing its activation and leading to its autocatalytic cleavage. This is Protein RecA from Shewanella halifaxensis (strain HAW-EB4).